A 337-amino-acid polypeptide reads, in one-letter code: Ferredoxin--NADP reductase (337 aa).

FAD is bound by residues Glu42, Gln50, Tyr55, Val97, Phe130, Asp292, and Thr333.

It belongs to the ferredoxin--NADP reductase type 2 family. In terms of assembly, homodimer. FAD is required as a cofactor.

It carries out the reaction 2 reduced [2Fe-2S]-[ferredoxin] + NADP(+) + H(+) = 2 oxidized [2Fe-2S]-[ferredoxin] + NADPH. The polypeptide is Ferredoxin--NADP reductase (Streptococcus mutans serotype c (strain ATCC 700610 / UA159)).